A 428-amino-acid polypeptide reads, in one-letter code: Delta-aminolevulinic acid dehydratase, chloroplastic (428 aa).

Lys-294 acts as the Schiff-base intermediate with substrate in catalysis. 5-aminolevulinate contacts are provided by Arg-304 and Lys-316. Glu-332 contributes to the Mg(2+) binding site. Lys-347 functions as the Schiff-base intermediate with substrate in the catalytic mechanism. Residues Ser-373 and Tyr-412 each contribute to the 5-aminolevulinate site.

This sequence belongs to the ALAD family. Homooctamer. Requires Mg(2+) as cofactor.

Its subcellular location is the plastid. The protein resides in the chloroplast. The enzyme catalyses 2 5-aminolevulinate = porphobilinogen + 2 H2O + H(+). Its pathway is porphyrin-containing compound metabolism; protoporphyrin-IX biosynthesis; coproporphyrinogen-III from 5-aminolevulinate: step 1/4. Its function is as follows. Catalyzes an early step in the biosynthesis of tetrapyrroles. Binds two molecules of 5-aminolevulinate per subunit, each at a distinct site, and catalyzes their condensation to form porphobilinogen. The polypeptide is Delta-aminolevulinic acid dehydratase, chloroplastic (HEMB) (Hordeum vulgare (Barley)).